Reading from the N-terminus, the 667-residue chain is UvrABC system protein B (667 aa).

One can recognise a Helicase ATP-binding domain in the interval 28-185 (NNFKQGLKEQ…NKLIELKYQR (158 aa)). 41-48 (GATGTGKT) lines the ATP pocket. The Beta-hairpin signature appears at 94 to 117 (YYDYYQPEAYVASSDTYIEKDSKI). In terms of domain architecture, Helicase C-terminal spans 432-594 (QMDDLYFEIK…VTPTALNKTI (163 aa)). Residues 629 to 664 (NKEIKRLQKTMKEAAKALDFEKAATLRDLILDLEKK) enclose the UVR domain.

It belongs to the UvrB family. As to quaternary structure, forms a heterotetramer with UvrA during the search for lesions. Interacts with UvrC in an incision complex.

The protein resides in the cytoplasm. The UvrABC repair system catalyzes the recognition and processing of DNA lesions. A damage recognition complex composed of 2 UvrA and 2 UvrB subunits scans DNA for abnormalities. Upon binding of the UvrA(2)B(2) complex to a putative damaged site, the DNA wraps around one UvrB monomer. DNA wrap is dependent on ATP binding by UvrB and probably causes local melting of the DNA helix, facilitating insertion of UvrB beta-hairpin between the DNA strands. Then UvrB probes one DNA strand for the presence of a lesion. If a lesion is found the UvrA subunits dissociate and the UvrB-DNA preincision complex is formed. This complex is subsequently bound by UvrC and the second UvrB is released. If no lesion is found, the DNA wraps around the other UvrB subunit that will check the other stand for damage. The polypeptide is UvrABC system protein B (Aster yellows witches'-broom phytoplasma (strain AYWB)).